The chain runs to 295 residues: Acetylglutamate kinase (295 aa).

Substrate is bound by residues 64–65 (GG), R86, and N190.

This sequence belongs to the acetylglutamate kinase family. ArgB subfamily.

The protein localises to the cytoplasm. It catalyses the reaction N-acetyl-L-glutamate + ATP = N-acetyl-L-glutamyl 5-phosphate + ADP. The protein operates within amino-acid biosynthesis; L-arginine biosynthesis; N(2)-acetyl-L-ornithine from L-glutamate: step 2/4. Catalyzes the ATP-dependent phosphorylation of N-acetyl-L-glutamate. This chain is Acetylglutamate kinase, found in Pelotomaculum thermopropionicum (strain DSM 13744 / JCM 10971 / SI).